The primary structure comprises 241 residues: MSRKFISEFLGTFWLVFGGCGSAVFAAAFPELGIGFLGVAFAFGLTVLTMAYAVGGISGGHFNPAVSVGLTVAGKFPAANLVPYIVAQVLGAVVAAAALYVILTGKAGAEIGGFAANGYGEHSPGGYSLLSALLIEIILTAFFLVVILGSTHGRVPVGFAPVAIGLALTLIHLISIPVTNTSVNPARSTGQALFVGGWALQQLWLFWLAPILGGAIGAVVWKIFGEEEKAGHAGSVQPAKT.

Residues 23-43 traverse the membrane as a helical segment; that stretch reads AVFAAAFPELGIGFLGVAFAF. An NPA 1 motif is present at residues 63 to 65; that stretch reads NPA. Helical transmembrane passes span 85–105, 129–149, and 156–176; these read IVAQ…ILTG, LLSA…VILG, and PVGF…LISI. The NPA 2 signature appears at 184-186; that stretch reads NPA. Residues 204 to 224 form a helical membrane-spanning segment; it reads WLFWLAPILGGAIGAVVWKIF.

This sequence belongs to the MIP/aquaporin (TC 1.A.8) family. Homotetramer.

It is found in the cell inner membrane. It catalyses the reaction H2O(in) = H2O(out). Its function is as follows. Channel that permits osmotically driven movement of water in both directions. It is involved in the osmoregulation and in the maintenance of cell turgor during volume expansion in rapidly growing cells. It mediates rapid entry or exit of water in response to abrupt changes in osmolarity. The chain is Aquaporin Z 1 from Agrobacterium fabrum (strain C58 / ATCC 33970) (Agrobacterium tumefaciens (strain C58)).